The sequence spans 181 residues: Ribonuclease M5 (181 aa).

Residues 5–88 (KEIIVVEGKD…IKHAYLNTKD (84 aa)) form the Toprim domain. Mg(2+) contacts are provided by Glu11, Asp57, and Asp59.

This sequence belongs to the ribonuclease M5 family. It depends on Mg(2+) as a cofactor.

Its subcellular location is the cytoplasm. It catalyses the reaction Endonucleolytic cleavage of RNA, removing 21 and 42 nucleotides, respectively, from the 5'- and 3'-termini of a 5S-rRNA precursor.. In terms of biological role, required for correct processing of both the 5' and 3' ends of 5S rRNA precursor. Cleaves both sides of a double-stranded region yielding mature 5S rRNA in one step. The polypeptide is Ribonuclease M5 (Borreliella burgdorferi (strain ATCC 35210 / DSM 4680 / CIP 102532 / B31) (Borrelia burgdorferi)).